Consider the following 257-residue polypeptide: Transmembrane protein C257L (257 aa).

2 consecutive transmembrane segments (helical) span residues 123–143 (LELLGYSPTPIIGGDFMFTAL) and 163–183 (MMIFFLIILLCVILGIFYVLV).

It belongs to the asfivirus C257R family.

Its subcellular location is the host membrane. It is found in the virion. In African swine fever virus (strain Badajoz 1971 Vero-adapted) (Ba71V), this protein is Transmembrane protein C257L.